The chain runs to 275 residues: 2,3,4,5-tetrahydropyridine-2,6-dicarboxylate N-succinyltransferase (275 aa).

Belongs to the transferase hexapeptide repeat family.

It localises to the cytoplasm. The catalysed reaction is (S)-2,3,4,5-tetrahydrodipicolinate + succinyl-CoA + H2O = (S)-2-succinylamino-6-oxoheptanedioate + CoA. The protein operates within amino-acid biosynthesis; L-lysine biosynthesis via DAP pathway; LL-2,6-diaminopimelate from (S)-tetrahydrodipicolinate (succinylase route): step 1/3. This Paraburkholderia phytofirmans (strain DSM 17436 / LMG 22146 / PsJN) (Burkholderia phytofirmans) protein is 2,3,4,5-tetrahydropyridine-2,6-dicarboxylate N-succinyltransferase.